The chain runs to 338 residues: 4-hydroxythreonine-4-phosphate dehydrogenase (338 aa).

Substrate is bound by residues histidine 136 and threonine 137. A divalent metal cation contacts are provided by histidine 173, histidine 218, and histidine 273. Lysine 281, asparagine 290, and arginine 299 together coordinate substrate.

Belongs to the PdxA family. In terms of assembly, homodimer. The cofactor is Zn(2+). It depends on Mg(2+) as a cofactor. Requires Co(2+) as cofactor.

It is found in the cytoplasm. The catalysed reaction is 4-(phosphooxy)-L-threonine + NAD(+) = 3-amino-2-oxopropyl phosphate + CO2 + NADH. It participates in cofactor biosynthesis; pyridoxine 5'-phosphate biosynthesis; pyridoxine 5'-phosphate from D-erythrose 4-phosphate: step 4/5. In terms of biological role, catalyzes the NAD(P)-dependent oxidation of 4-(phosphooxy)-L-threonine (HTP) into 2-amino-3-oxo-4-(phosphooxy)butyric acid which spontaneously decarboxylates to form 3-amino-2-oxopropyl phosphate (AHAP). This chain is 4-hydroxythreonine-4-phosphate dehydrogenase, found in Ralstonia nicotianae (strain ATCC BAA-1114 / GMI1000) (Ralstonia solanacearum).